The chain runs to 554 residues: CTP synthase (554 aa).

The interval 1–265 is amidoligase domain; that stretch reads MTPLIFVTGG…DELVIDQFKL (265 aa). Serine 13 is a binding site for CTP. UTP is bound at residue serine 13. Residues 14–19 and aspartate 71 each bind ATP; that span reads SLGKGI. Positions 71 and 139 each coordinate Mg(2+). CTP contacts are provided by residues 146 to 148, 186 to 191, and lysine 222; these read DIE and KTKPTQ. UTP contacts are provided by residues 186–191 and lysine 222; that span reads KTKPTQ. Residues 292–545 enclose the Glutamine amidotransferase type-1 domain; it reads TIAVVGKYVD…VRAAREKKAG (254 aa). L-glutamine is bound at residue glycine 353. Residue cysteine 380 is the Nucleophile; for glutamine hydrolysis of the active site. Residues 381 to 384, glutamate 404, and arginine 471 contribute to the L-glutamine site; that span reads YGMQ. Residues histidine 518 and glutamate 520 contribute to the active site.

This sequence belongs to the CTP synthase family. As to quaternary structure, homotetramer.

It catalyses the reaction UTP + L-glutamine + ATP + H2O = CTP + L-glutamate + ADP + phosphate + 2 H(+). It carries out the reaction L-glutamine + H2O = L-glutamate + NH4(+). The catalysed reaction is UTP + NH4(+) + ATP = CTP + ADP + phosphate + 2 H(+). It functions in the pathway pyrimidine metabolism; CTP biosynthesis via de novo pathway; CTP from UDP: step 2/2. Its activity is regulated as follows. Allosterically activated by GTP, when glutamine is the substrate; GTP has no effect on the reaction when ammonia is the substrate. The allosteric effector GTP functions by stabilizing the protein conformation that binds the tetrahedral intermediate(s) formed during glutamine hydrolysis. Inhibited by the product CTP, via allosteric rather than competitive inhibition. In terms of biological role, catalyzes the ATP-dependent amination of UTP to CTP with either L-glutamine or ammonia as the source of nitrogen. Regulates intracellular CTP levels through interactions with the four ribonucleotide triphosphates. This chain is CTP synthase, found in Xanthomonas campestris pv. campestris (strain B100).